Consider the following 634-residue polypeptide: Chaperone protein HtpG (634 aa).

Positions methionine 1 to arginine 342 are a; substrate-binding. The tract at residues glutamate 343–glutamine 559 is b. A c region spans residues isoleucine 560 to alanine 634.

Belongs to the heat shock protein 90 family. Homodimer.

It localises to the cytoplasm. Functionally, molecular chaperone. Has ATPase activity. The sequence is that of Chaperone protein HtpG from Pseudomonas putida (strain ATCC 47054 / DSM 6125 / CFBP 8728 / NCIMB 11950 / KT2440).